The sequence spans 150 residues: Large ribosomal subunit protein bL9 (150 aa).

The protein belongs to the bacterial ribosomal protein bL9 family.

Binds to the 23S rRNA. This is Large ribosomal subunit protein bL9 from Streptococcus pyogenes serotype M6 (strain ATCC BAA-946 / MGAS10394).